A 257-amino-acid polypeptide reads, in one-letter code: Hydroxyacylglutathione hydrolase (257 aa).

Zn(2+) contacts are provided by histidine 58, histidine 60, aspartate 62, histidine 63, histidine 116, aspartate 135, and histidine 173.

This sequence belongs to the metallo-beta-lactamase superfamily. Glyoxalase II family. In terms of assembly, monomer. Zn(2+) is required as a cofactor.

The enzyme catalyses an S-(2-hydroxyacyl)glutathione + H2O = a 2-hydroxy carboxylate + glutathione + H(+). The protein operates within secondary metabolite metabolism; methylglyoxal degradation; (R)-lactate from methylglyoxal: step 2/2. Thiolesterase that catalyzes the hydrolysis of S-D-lactoyl-glutathione to form glutathione and D-lactic acid. The protein is Hydroxyacylglutathione hydrolase of Brucella melitensis biotype 1 (strain ATCC 23456 / CCUG 17765 / NCTC 10094 / 16M).